The chain runs to 389 residues: Sulfate adenylyltransferase (389 aa).

The protein belongs to the sulfate adenylyltransferase family.

The enzyme catalyses sulfate + ATP + H(+) = adenosine 5'-phosphosulfate + diphosphate. It functions in the pathway sulfur metabolism; hydrogen sulfide biosynthesis; sulfite from sulfate: step 1/3. This is Sulfate adenylyltransferase from Deinococcus geothermalis (strain DSM 11300 / CIP 105573 / AG-3a).